Reading from the N-terminus, the 271-residue chain is 2-dehydro-3-deoxyphosphooctonate aldolase (271 aa).

This sequence belongs to the KdsA family.

Its subcellular location is the cytoplasm. It carries out the reaction D-arabinose 5-phosphate + phosphoenolpyruvate + H2O = 3-deoxy-alpha-D-manno-2-octulosonate-8-phosphate + phosphate. The protein operates within carbohydrate biosynthesis; 3-deoxy-D-manno-octulosonate biosynthesis; 3-deoxy-D-manno-octulosonate from D-ribulose 5-phosphate: step 2/3. Its pathway is bacterial outer membrane biogenesis; lipopolysaccharide biosynthesis. The sequence is that of 2-dehydro-3-deoxyphosphooctonate aldolase from Campylobacter jejuni subsp. jejuni serotype O:23/36 (strain 81-176).